We begin with the raw amino-acid sequence, 494 residues long: Membrane-bound lytic murein transglycosylase F (494 aa).

Residues 1–20 (MIKYLYVILLGLLLSGCQPA) form the signal peptide. A non-LT domain region spans residues 21-259 (EVVEIEASPK…HLNEKYFGHV (239 aa)). The tract at residues 260–494 (KRFDYVDTRA…LKPKLGAGQP (235 aa)) is LT domain. E304 is an active-site residue. The span at 473 to 485 (QSLASDSKTNNTL) shows a compositional bias: polar residues. Residues 473 to 494 (QSLASDSKTNNTLKPKLGAGQP) form a disordered region.

In the N-terminal section; belongs to the bacterial solute-binding protein 3 family. The protein in the C-terminal section; belongs to the transglycosylase Slt family.

The protein resides in the cell outer membrane. The catalysed reaction is Exolytic cleavage of the (1-&gt;4)-beta-glycosidic linkage between N-acetylmuramic acid (MurNAc) and N-acetylglucosamine (GlcNAc) residues in peptidoglycan, from either the reducing or the non-reducing ends of the peptidoglycan chains, with concomitant formation of a 1,6-anhydrobond in the MurNAc residue.. In terms of biological role, murein-degrading enzyme that degrades murein glycan strands and insoluble, high-molecular weight murein sacculi, with the concomitant formation of a 1,6-anhydromuramoyl product. Lytic transglycosylases (LTs) play an integral role in the metabolism of the peptidoglycan (PG) sacculus. Their lytic action creates space within the PG sacculus to allow for its expansion as well as for the insertion of various structures such as secretion systems and flagella. In Shewanella denitrificans (strain OS217 / ATCC BAA-1090 / DSM 15013), this protein is Membrane-bound lytic murein transglycosylase F.